Here is a 346-residue protein sequence, read N- to C-terminus: Enkurin domain-containing protein 1 (346 aa).

The disordered stretch occupies residues methionine 1–glycine 35. Serine 91 bears the Phosphoserine mark. Residues serine 91 to cysteine 171 are required for binding to microtubules. Over residues arginine 114–glycine 125 the composition is skewed to basic and acidic residues. Disordered regions lie at residues arginine 114 to proline 137, alanine 167 to leucine 197, and alanine 260 to proline 280. Position 136 is a phosphoserine (serine 136). Residues glycine 174–proline 190 are compositionally biased toward pro residues. The Enkurin domain occupies glutamate 251 to lysine 343.

As to quaternary structure, interacts with alpha-tubulin. Interacts (via central region) with CCP110 (via N-terminal region); competes with CEP97 for binding to CCP110.

It localises to the cytoplasm. Its subcellular location is the cytoskeleton. It is found in the microtubule organizing center. The protein resides in the centrosome. The protein localises to the centriole. It localises to the cilium basal body. Its subcellular location is the cell projection. It is found in the cilium. The protein resides in the spindle. The protein localises to the spindle pole. It localises to the cilium axoneme. Microtubule-binding protein which regulates microtubule organization and stability. Promotes the stability of astral microtubules and facilitates the proper orientation of the mitotic spindle. This allows the oriented division of basal keratinocytes and contributes to epidermal stratification. Required for the assembly of both primary and motile cilia. Destabilizes the interaction between CCP110 and CEP97 by competing with CEP97 for binding to CCP110 which promotes the removal of CCP110 and CEP97 from the mother centriole and allows the initiation of ciliogenesis. This Homo sapiens (Human) protein is Enkurin domain-containing protein 1 (ENKD1).